Here is a 308-residue protein sequence, read N- to C-terminus: MPGRELAPRQNVEFQTLDGLTLRGWLFPAQSRGPAVIITPGFNCVKEMFVSEVAESFQHSDVTALVYDPRTLGDSGGLPRNNIDPLAQVSDYSDALTFLKTLPIVDQTNISFWGMSFSALVALNAAALDKRARCCIAVCPLTGMQPEPDMLPKVLARCMQDRESQVVGNPPVTISVLTEQGRNPAGMGIGADKMEYDYMVNAKFRGAPNYENRTTLQSYYKMMAWQPFEIMKYLSKTRVLMIIPENDTISPADKQQVLFDGLPEPKTAHIAKGKGHLDVLSGADYEILAEMQAYFIKGPRGKGNAPSA.

It belongs to the polyketide transferase af380 family.

It functions in the pathway mycotoxin biosynthesis. Thiohydrolase; part of the gene cluster that mediates the biosynthesis of brefeldin A (BFA), a protein transport inhibitor that shows antiviral, antifungal, and antitumor properties. The proposed biosynthesis of BFA involves formation of an acyclic polyketide chain that is differentially tailored throughout the backbone. The highly reducing polyketide synthase Bref-PKS is proposed to synthesize the precisely reduced octaketide precursor, which could then be directly offloaded by the thiohydrolase enzyme Bref-TH followed by a cytochrome P450 monooxygenase-mediated formation of the cyclopentane ring and macrocyclization to afford 7-deoxy BFA. Alternatively, the first ring annulation can also occur on the ACP-tethered intermediate before the thiohydrolase release and lactonization. The C7-hydroxylation by another cytochrome P450 monooxygenase is believed to be the final step in the process to obtain the final structure of BFA. In addition to the HRPKS Bref-PKS and the thiohydrolase Bref-TH, the brefeldin A biosynthesis cluster contains 4 cytochrome p450 monooxygenases (called orf3 to orf6), as well a the probable cluster-specific transcription regulator orf8. The sequence is that of Thiohydrolase from Eupenicillium brefeldianum (Penicillium brefeldianum).